Here is a 407-residue protein sequence, read N- to C-terminus: MSNVYDILKERGYIKQLTHEEEIRELLGKEKISFYIGFDPTADSLHVGHFLQMMVMAHMQKAGHRPIALVGGGTGMIGDPTGKTDMRKMMTKEQIEYNCNCFKKQLAKIIDFSEDKAIMVNNADWLLNLNYIEFLREIGVHFSVNKMLTAECFKSRLEKGLSFLEFNYMLMQGYDFLELNRKYNCVMELGGDDQWSNILAGVDLIRRKESKSAYGMTFTLLTNSEGKKMGKTESGALWLDPEKTSPYEFYQYWRNVADADVEKCLRLITFLPMDEVRRLSSLEGAEINEAKRVLAFEVTKLIHGEEEAQKAKVAAEALFGGNVKDLGNMPTAYIDKDDLNNSLVDLLAKCEILPSKSEARRLIKQGGLYVNDEKVTDINLVLTEEHVTEDGIMIRRGKKNFNRIVVE.

Y35 contributes to the L-tyrosine binding site. Positions 40-49 (PTADSLHVGH) match the 'HIGH' region motif. Y168 and Q172 together coordinate L-tyrosine. The 'KMSKS' region motif lies at 228 to 232 (KMGKT). Residue K231 participates in ATP binding. In terms of domain architecture, S4 RNA-binding spans 341 to 405 (NSLVDLLAKC…RGKKNFNRIV (65 aa)).

It belongs to the class-I aminoacyl-tRNA synthetase family. TyrS type 1 subfamily. As to quaternary structure, homodimer.

The protein resides in the cytoplasm. It catalyses the reaction tRNA(Tyr) + L-tyrosine + ATP = L-tyrosyl-tRNA(Tyr) + AMP + diphosphate + H(+). Its function is as follows. Catalyzes the attachment of tyrosine to tRNA(Tyr) in a two-step reaction: tyrosine is first activated by ATP to form Tyr-AMP and then transferred to the acceptor end of tRNA(Tyr). In Clostridium botulinum (strain Loch Maree / Type A3), this protein is Tyrosine--tRNA ligase.